The sequence spans 571 residues: Urease subunit alpha (571 aa).

The Urease domain occupies 133-571; sequence GGIDTHVHFI…LPLTQRYFLF (439 aa). Ni(2+) is bound by residues His-138, His-140, and Lys-221. N6-carboxylysine is present on Lys-221. His-223 is a substrate binding site. The Ni(2+) site is built by His-250 and His-276. The Proton donor role is filled by His-324. Residue Asp-364 coordinates Ni(2+).

Belongs to the metallo-dependent hydrolases superfamily. Urease alpha subunit family. As to quaternary structure, heterotrimer of UreA (gamma), UreB (beta) and UreC (alpha) subunits. Three heterotrimers associate to form the active enzyme. It depends on Ni cation as a cofactor. Post-translationally, carboxylation allows a single lysine to coordinate two nickel ions.

The protein resides in the cytoplasm. It carries out the reaction urea + 2 H2O + H(+) = hydrogencarbonate + 2 NH4(+). Its pathway is nitrogen metabolism; urea degradation; CO(2) and NH(3) from urea (urease route): step 1/1. The chain is Urease subunit alpha from Staphylococcus aureus (strain USA300).